Reading from the N-terminus, the 315-residue chain is Homoserine kinase (315 aa).

96 to 106 (PHSRGLGSSAA) provides a ligand contact to ATP.

It belongs to the GHMP kinase family. Homoserine kinase subfamily.

The protein resides in the cytoplasm. It carries out the reaction L-homoserine + ATP = O-phospho-L-homoserine + ADP + H(+). The protein operates within amino-acid biosynthesis; L-threonine biosynthesis; L-threonine from L-aspartate: step 4/5. Catalyzes the ATP-dependent phosphorylation of L-homoserine to L-homoserine phosphate. The protein is Homoserine kinase of Mycolicibacterium paratuberculosis (strain ATCC BAA-968 / K-10) (Mycobacterium paratuberculosis).